We begin with the raw amino-acid sequence, 284 residues long: MKIVLISGLSGSGKSVALRQMEDSGYFCVDNLPLEMLPALVSYHIERADETELAVSVDVRSGIDIGQAREQIASLRRLGHRVEVLFVEAEESVLVRRFSETRRGHPLSNQDMTLLESLKKEREWLFPLKEIAYCIDTSKMNAQQLRHAVRQWLKVERTGLLVILESFGFKYGVPNNADFMFDMRSLPNPYYDPELRPYTGMDKPVWDYLDGQPLVQEMVDDIERFVTHWLPRLEDESRSYVTVAIGCTGGQHRSVYIVEKLARRLKGRYELLIRHRQAQNLSDR.

Residue 8 to 15 coordinates ATP; sequence GLSGSGKS. 58–61 contributes to the GTP binding site; it reads DVRS.

This sequence belongs to the RapZ-like family.

Functionally, displays ATPase and GTPase activities. This chain is Nucleotide-binding protein NMB0738, found in Neisseria meningitidis serogroup B (strain ATCC BAA-335 / MC58).